A 136-amino-acid chain; its full sequence is Large ribosomal subunit protein uL16 (136 aa).

The protein belongs to the universal ribosomal protein uL16 family. Part of the 50S ribosomal subunit.

Binds 23S rRNA and is also seen to make contacts with the A and possibly P site tRNAs. The chain is Large ribosomal subunit protein uL16 from Rickettsia peacockii (strain Rustic).